We begin with the raw amino-acid sequence, 109 residues long: U3-lycotoxin-Ls1x (109 aa).

The N-terminal stretch at 1 to 20 (MKFVLLFGVLLVTLFSYSSA) is a signal peptide. The propeptide occupies 21 to 44 (EMLDDFDQADEDELLSLIEKEEAR). Cystine bridges form between Cys48–Cys63, Cys55–Cys72, Cys62–Cys88, and Cys74–Cys86.

It belongs to the neurotoxin 19 (CSTX) family. 01 subfamily. In terms of tissue distribution, expressed by the venom gland.

It is found in the secreted. This chain is U3-lycotoxin-Ls1x, found in Lycosa singoriensis (Wolf spider).